The chain runs to 558 residues: 2-isopropylmalate synthase (558 aa).

The 277-residue stretch at 28–304 folds into the Pyruvate carboxyltransferase domain; sequence PIWCSVDLRD…DPELEFSNLN (277 aa). Positions 37, 243, 245, and 279 each coordinate Mg(2+). A regulatory domain region spans residues 438–558; sequence NRSPYYLKNY…VSALNRSKLK (121 aa).

This sequence belongs to the alpha-IPM synthase/homocitrate synthase family. LeuA type 2 subfamily. As to quaternary structure, homodimer. It depends on Mg(2+) as a cofactor.

Its subcellular location is the cytoplasm. The catalysed reaction is 3-methyl-2-oxobutanoate + acetyl-CoA + H2O = (2S)-2-isopropylmalate + CoA + H(+). The protein operates within amino-acid biosynthesis; L-leucine biosynthesis; L-leucine from 3-methyl-2-oxobutanoate: step 1/4. Its function is as follows. Catalyzes the condensation of the acetyl group of acetyl-CoA with 3-methyl-2-oxobutanoate (2-ketoisovalerate) to form 3-carboxy-3-hydroxy-4-methylpentanoate (2-isopropylmalate). This chain is 2-isopropylmalate synthase, found in Clostridium acetobutylicum (strain ATCC 824 / DSM 792 / JCM 1419 / IAM 19013 / LMG 5710 / NBRC 13948 / NRRL B-527 / VKM B-1787 / 2291 / W).